A 348-amino-acid polypeptide reads, in one-letter code: Ferredoxin--NADP reductase 1 (348 aa).

FAD is bound by residues Asp33, Lys41, Tyr45, Val85, Leu120, Asp287, and Ser328.

The protein belongs to the ferredoxin--NADP reductase type 2 family. In terms of assembly, homodimer. The cofactor is FAD.

It catalyses the reaction 2 reduced [2Fe-2S]-[ferredoxin] + NADP(+) + H(+) = 2 oxidized [2Fe-2S]-[ferredoxin] + NADPH. In Oceanobacillus iheyensis (strain DSM 14371 / CIP 107618 / JCM 11309 / KCTC 3954 / HTE831), this protein is Ferredoxin--NADP reductase 1.